The sequence spans 518 residues: E3 ubiquitin-protein ligase TRIM39 (518 aa).

The RING-type zinc finger occupies 29–70; it reads CSVCLEYLKEPVIIECGHNFCKACITRWWEDLERDFPCPVCR. The B box-type zinc-finger motif lies at 102–143; the sequence is RDESLCPQHHEALSLFCYEDQEAVCLICAISHTHRAHTVVPL. Zn(2+)-binding residues include C107, H110, C129, and H135. Positions 181 to 250 form a coiled coil; sequence ELKRLVESRR…AHLAAEVEGK (70 aa). 2 interaction with CDKN1A regions span residues 268–337 and 389–518; these read KNIP…QLIA and TSGR…TDWE. Residues 319-514 enclose the B30.2/SPRY domain; sequence SNFPRQYFAL…NAAPLTIRPP (196 aa).

Belongs to the TRIM/RBCC family. As to quaternary structure, interacts with MOAP1. Interacts with CDKN1A. Post-translationally, autoubiquitinated.

It is found in the cytoplasm. The protein localises to the cytosol. The protein resides in the mitochondrion. It localises to the nucleus. It catalyses the reaction S-ubiquitinyl-[E2 ubiquitin-conjugating enzyme]-L-cysteine + [acceptor protein]-L-lysine = [E2 ubiquitin-conjugating enzyme]-L-cysteine + N(6)-ubiquitinyl-[acceptor protein]-L-lysine.. It functions in the pathway protein modification; protein ubiquitination. Its function is as follows. E3 ubiquitin-protein ligase. May facilitate apoptosis by inhibiting APC/C-Cdh1-mediated poly-ubiquitination and subsequent proteasome-mediated degradation of the pro-apoptotic protein MOAP1. Regulates the G1/S transition of the cell cycle and DNA damage-induced G2 arrest by stabilizing CDKN1A/p21. Positively regulates CDKN1A/p21 stability by competing with DTL for CDKN1A/p21 binding, therefore disrupting DCX(DTL) E3 ubiquitin ligase complex-mediated CDKN1A/p21 ubiquitination and degradation. This chain is E3 ubiquitin-protein ligase TRIM39 (TRIM39), found in Pan troglodytes (Chimpanzee).